The primary structure comprises 685 residues: Protein snwA (685 aa).

Disordered regions lie at residues 1–62, 88–112, 347–573, and 605–685; these read MTSL…GYLP, RKGK…TSIV, LAED…DSIY, and AVSN…SKKR. Composition is skewed to low complexity over residues 30 to 41 and 93 to 102; these read PQQQKQQQQQQQ and KSSNSNTSNM. Residues 194–360 are SNW; it reads ATYIKYTPSN…VRNERSGIIQ (167 aa). Residues 370–381 are compositionally biased toward acidic residues; the sequence is DSDNDNDNDSSS. Positions 399–494 are enriched in basic and acidic residues; sequence RSTERIPSRN…DRYSKRRSDS (96 aa). Over residues 495-507 the composition is skewed to acidic residues; it reads DSDSDSDSSDSED. The segment covering 508-556 has biased composition (basic and acidic residues); sequence ERVRRERKEKLERDKIRMEKKRELEREYRLEASGKKSKFNRDQDRDISE. Positions 618–631 are enriched in polar residues; that stretch reads EDNTSIQDVLSNSR. Residues 646 to 685 show a composition bias toward basic and acidic residues; it reads PNKEFSGTDRSKDRTGPVAFEKEKKKSDDPFGFDDFSKKR.

Belongs to the SNW family. Interacts with cypE.

The protein resides in the nucleus. This Dictyostelium discoideum (Social amoeba) protein is Protein snwA (snwA).